The sequence spans 630 residues: Alpha-1,3-mannosyltransferase MNT3 (630 aa).

The Cytoplasmic portion of the chain corresponds to 1-14 (MLKSLKSRRLILKR). The chain crosses the membrane as a helical; Signal-anchor for type II membrane protein span at residues 15-31 (LVTLLLSLFFSYLIFSA). The Lumenal segment spans residues 32-630 (SRNVTSSNKL…NDISRTWNAN (599 aa)). 2 N-linked (GlcNAc...) asparagine glycosylation sites follow: asparagine 34 and asparagine 168.

This sequence belongs to the MNN1/MNT family.

It is found in the golgi apparatus membrane. It participates in protein modification; protein glycosylation. Functionally, mannosyltransferase involved in adding the 4th and 5th mannose residues of O-linked glycans. The chain is Alpha-1,3-mannosyltransferase MNT3 (MNT3) from Saccharomyces cerevisiae (strain ATCC 204508 / S288c) (Baker's yeast).